Consider the following 118-residue polypeptide: Large ribosomal subunit protein bL20 (118 aa).

The protein belongs to the bacterial ribosomal protein bL20 family.

Functionally, binds directly to 23S ribosomal RNA and is necessary for the in vitro assembly process of the 50S ribosomal subunit. It is not involved in the protein synthesizing functions of that subunit. This chain is Large ribosomal subunit protein bL20, found in Parvibaculum lavamentivorans (strain DS-1 / DSM 13023 / NCIMB 13966).